A 127-amino-acid chain; its full sequence is Large ribosomal subunit protein uL24A (127 aa).

It belongs to the universal ribosomal protein uL24 family. In terms of assembly, component of the large ribosomal subunit (LSU). Mature yeast ribosomes consist of a small (40S) and a large (60S) subunit. The 40S small subunit contains 1 molecule of ribosomal RNA (18S rRNA) and 33 different proteins (encoded by 57 genes). The large 60S subunit contains 3 rRNA molecules (25S, 5.8S and 5S rRNA) and 46 different proteins (encoded by 81 genes).

It localises to the cytoplasm. Its function is as follows. Component of the ribosome, a large ribonucleoprotein complex responsible for the synthesis of proteins in the cell. The small ribosomal subunit (SSU) binds messenger RNAs (mRNAs) and translates the encoded message by selecting cognate aminoacyl-transfer RNA (tRNA) molecules. The large subunit (LSU) contains the ribosomal catalytic site termed the peptidyl transferase center (PTC), which catalyzes the formation of peptide bonds, thereby polymerizing the amino acids delivered by tRNAs into a polypeptide chain. The nascent polypeptides leave the ribosome through a tunnel in the LSU and interact with protein factors that function in enzymatic processing, targeting, and the membrane insertion of nascent chains at the exit of the ribosomal tunnel. The sequence is that of Large ribosomal subunit protein uL24A from Saccharomyces cerevisiae (strain ATCC 204508 / S288c) (Baker's yeast).